A 550-amino-acid polypeptide reads, in one-letter code: Carboxylesterase 4A (550 aa).

Positions 1–20 are cleaved as a signal peptide; the sequence is MNWILCLSLTLLLVVQTAWG. An intrachain disulfide couples Cys88 to Cys116. The active-site Acyl-ester intermediate is the Ser221. Residues Cys273 and Cys284 are joined by a disulfide bond. An N-linked (GlcNAc...) asparagine glycan is attached at Asn276. Glu353 (charge relay system) is an active-site residue. A glycan (N-linked (GlcNAc...) asparagine) is linked at Asn386. His465 (charge relay system) is an active-site residue.

Belongs to the type-B carboxylesterase/lipase family.

The protein localises to the secreted. In terms of biological role, probable carboxylesterase. The chain is Carboxylesterase 4A (CES4A) from Bos taurus (Bovine).